Here is a 124-residue protein sequence, read N- to C-terminus: MSSNMQAMKQMRPALVSLTQQQARRRCFKLYRNCIRSIPHLIQHYNLSYNMSEMRNRFRSNFVEFEEVTEKNQLDRLAFIGETELFDAMSLLKTRSHVVNYFDTQPVNAKTISESEKLLNNFFE.

This sequence belongs to the complex I LYR family.

It is found in the mitochondrion inner membrane. Functionally, accessory subunit of the mitochondrial membrane respiratory chain NADH dehydrogenase (Complex I), that is believed to be not involved in catalysis. Complex I functions in the transfer of electrons from NADH to the respiratory chain. The immediate electron acceptor for the enzyme is believed to be ubiquinone. The protein is NADH dehydrogenase [ubiquinone] 1 alpha subcomplex subunit 6 (ndufa6) of Dictyostelium discoideum (Social amoeba).